Consider the following 251-residue polypeptide: Small ribosomal subunit protein uS2 (251 aa).

The tract at residues 232–251 (LQTGEEEMAAAEGESEQVEA) is disordered. Residues 235-251 (GEEEMAAAEGESEQVEA) are compositionally biased toward acidic residues.

Belongs to the universal ribosomal protein uS2 family.

The protein is Small ribosomal subunit protein uS2 of Geobacter metallireducens (strain ATCC 53774 / DSM 7210 / GS-15).